The primary structure comprises 173 residues: Urease accessory protein UreE (173 aa).

A disordered region spans residues 136-173; sequence PEGGAYAGSGQDHHDHSHGEHTQGEHTHDEAAEPHHHG. Residues 146–173 are compositionally biased toward basic and acidic residues; it reads QDHHDHSHGEHTQGEHTHDEAAEPHHHG.

Belongs to the UreE family.

Its subcellular location is the cytoplasm. In terms of biological role, involved in urease metallocenter assembly. Binds nickel. Probably functions as a nickel donor during metallocenter assembly. The protein is Urease accessory protein UreE of Beijerinckia indica subsp. indica (strain ATCC 9039 / DSM 1715 / NCIMB 8712).